Here is a 1798-residue protein sequence, read N- to C-terminus: DNA polymerase II large subunit (1798 aa).

Residues 286–309 form a disordered region; the sequence is EKGKSSEENKDESKAEDTGTESVA. Positions 1184–1319 constitute a DOD-type homing endonuclease domain; that stretch reads VVGYYLAEGY…ETLLLAKFGI (136 aa). Residues 1699–1798 form a disordered region; the sequence is TGHSNGKNGY…GISLDEFFGS (100 aa). Low complexity predominate over residues 1714–1731; it reads GKNGKASKKSGSLASKLS. Basic and acidic residues predominate over residues 1733 to 1753; sequence KGKEPSKKKESAKPKRSEKVK.

Belongs to the archaeal DNA polymerase II family. Heterodimer of a large subunit and a small subunit. Post-translationally, this protein undergoes a protein self splicing that involves a post-translational excision of the intervening region (intein) followed by peptide ligation.

The catalysed reaction is DNA(n) + a 2'-deoxyribonucleoside 5'-triphosphate = DNA(n+1) + diphosphate. It catalyses the reaction Exonucleolytic cleavage in the 3'- to 5'-direction to yield nucleoside 5'-phosphates.. In terms of biological role, possesses two activities: a DNA synthesis (polymerase) and an exonucleolytic activity that degrades single-stranded DNA in the 3'- to 5'-direction. Has a template-primer preference which is characteristic of a replicative DNA polymerase. The chain is DNA polymerase II large subunit (polC) from Thermococcus kodakarensis (strain ATCC BAA-918 / JCM 12380 / KOD1) (Pyrococcus kodakaraensis (strain KOD1)).